A 246-amino-acid chain; its full sequence is UDP-N-acetyl-D-mannosaminuronic acid transferase (246 aa).

This sequence belongs to the glycosyltransferase 26 family.

The catalysed reaction is UDP-N-acetyl-alpha-D-mannosaminouronate + N-acetyl-alpha-D-glucosaminyl-di-trans,octa-cis-undecaprenyl diphosphate = beta-D-ManNAcA-(1-&gt;4)-alpha-D-GlcNAc-di-trans,octa-cis-undecaprenyl diphosphate + UDP + H(+). Its pathway is bacterial outer membrane biogenesis; enterobacterial common antigen biosynthesis. Catalyzes the synthesis of Und-PP-GlcNAc-ManNAcA (Lipid II), the second lipid-linked intermediate involved in enterobacterial common antigen (ECA) synthesis. The sequence is that of UDP-N-acetyl-D-mannosaminuronic acid transferase from Citrobacter koseri (strain ATCC BAA-895 / CDC 4225-83 / SGSC4696).